A 156-amino-acid polypeptide reads, in one-letter code: 3-dehydroquinate dehydratase (156 aa).

The active-site Proton acceptor is tyrosine 22. Substrate-binding residues include asparagine 73, histidine 79, and aspartate 86. Catalysis depends on histidine 99, which acts as the Proton donor. Residues 100–101 and arginine 110 contribute to the substrate site; that span reads LS.

This sequence belongs to the type-II 3-dehydroquinase family. Homododecamer.

The enzyme catalyses 3-dehydroquinate = 3-dehydroshikimate + H2O. Its pathway is metabolic intermediate biosynthesis; chorismate biosynthesis; chorismate from D-erythrose 4-phosphate and phosphoenolpyruvate: step 3/7. Catalyzes a trans-dehydration via an enolate intermediate. The polypeptide is 3-dehydroquinate dehydratase (Nitratiruptor sp. (strain SB155-2)).